The sequence spans 243 residues: Carboxy-S-adenosyl-L-methionine synthase (243 aa).

S-adenosyl-L-methionine contacts are provided by residues Tyr35, 68-70 (GCS), 92-93 (DN), and Arg199.

It belongs to the class I-like SAM-binding methyltransferase superfamily. Cx-SAM synthase family. Homodimer.

It carries out the reaction prephenate + S-adenosyl-L-methionine = carboxy-S-adenosyl-L-methionine + 3-phenylpyruvate + H2O. Its function is as follows. Catalyzes the conversion of S-adenosyl-L-methionine (SAM) to carboxy-S-adenosyl-L-methionine (Cx-SAM). In Helicobacter pylori (strain J99 / ATCC 700824) (Campylobacter pylori J99), this protein is Carboxy-S-adenosyl-L-methionine synthase.